We begin with the raw amino-acid sequence, 876 residues long: Phosphoenolpyruvate carboxylase (876 aa).

Catalysis depends on residues H138 and K544.

The protein belongs to the PEPCase type 1 family. Requires Mg(2+) as cofactor.

It catalyses the reaction oxaloacetate + phosphate = phosphoenolpyruvate + hydrogencarbonate. Forms oxaloacetate, a four-carbon dicarboxylic acid source for the tricarboxylic acid cycle. This Marinomonas sp. (strain MWYL1) protein is Phosphoenolpyruvate carboxylase.